The chain runs to 443 residues: Glutamyl-tRNA reductase (443 aa).

Substrate-binding positions include 49 to 52, S109, 114 to 116, and Q120; these read TCNR and EPQ. The active-site Nucleophile is C50. 189–194 lines the NADP(+) pocket; it reads GAGKMC. The tract at residues 421–443 is disordered; the sequence is PDSQQTGGDSVEKDADSKQDLTS. Residues 430-443 are compositionally biased toward basic and acidic residues; that stretch reads SVEKDADSKQDLTS.

The protein belongs to the glutamyl-tRNA reductase family. Homodimer.

The catalysed reaction is (S)-4-amino-5-oxopentanoate + tRNA(Glu) + NADP(+) = L-glutamyl-tRNA(Glu) + NADPH + H(+). Its pathway is porphyrin-containing compound metabolism; protoporphyrin-IX biosynthesis; 5-aminolevulinate from L-glutamyl-tRNA(Glu): step 1/2. Functionally, catalyzes the NADPH-dependent reduction of glutamyl-tRNA(Glu) to glutamate 1-semialdehyde (GSA). The sequence is that of Glutamyl-tRNA reductase from Syntrophotalea carbinolica (strain DSM 2380 / NBRC 103641 / GraBd1) (Pelobacter carbinolicus).